The following is a 235-amino-acid chain: Calcium-activated potassium channel subunit beta-2 (235 aa).

The segment at 1–45 (MFIWTSGRTSSSYRHDEKRNIYQKIRDHDLLDKRKTVTALKAGED) is ball and chain. The Cytoplasmic portion of the chain corresponds to 1 to 46 (MFIWTSGRTSSSYRHDEKRNIYQKIRDHDLLDKRKTVTALKAGEDR). Residues 47–67 (AILLGLAMMVCSIMMYFLLGI) traverse the membrane as a helical segment. At 68–194 (TLLRSYMQSV…VILTKLYSSN (127 aa)) the chain is on the extracellular side. 3 N-linked (GlcNAc...) asparagine glycosylation sites follow: Asn88, Asn96, and Asn119. A helical membrane pass occupies residues 195–215 (VLFHSLFWPTCMMAGGVAIVA). Residues 216-235 (MVKLTQYLSLLCERIQRINR) lie on the Cytoplasmic side of the membrane.

This sequence belongs to the KCNMB (TC 8.A.14.1) family. KCNMB2 subfamily. As to quaternary structure, interacts with KCNMA1 tetramer. There are probably 4 molecules of KCMNB2 per KCNMA1 tetramer. Post-translationally, N-glycosylated. As to expression, expressed in kidney, heart and brain. Highly expressed in ovary. Expressed at low level in other tissues.

It is found in the membrane. Its function is as follows. Regulatory subunit of the calcium activated potassium KCNMA1 (maxiK) channel. Modulates the calcium sensitivity and gating kinetics of KCNMA1, thereby contributing to KCNMA1 channel diversity. Acts as a negative regulator that confers rapid and complete inactivation of KCNMA1 channel complex. May participate in KCNMA1 inactivation in chromaffin cells of the adrenal gland or in hippocampal CA1 neurons. In Homo sapiens (Human), this protein is Calcium-activated potassium channel subunit beta-2 (KCNMB2).